Consider the following 198-residue polypeptide: Recombination protein RecR (198 aa).

The C4-type zinc-finger motif lies at 58–73 (CSVCGNFTDKDPCAIC). Positions 81-175 (SIICVIEQPK…KVTRIAHGVP (95 aa)) constitute a Toprim domain.

It belongs to the RecR family.

Functionally, may play a role in DNA repair. It seems to be involved in an RecBC-independent recombinational process of DNA repair. It may act with RecF and RecO. The polypeptide is Recombination protein RecR (Clostridium botulinum (strain ATCC 19397 / Type A)).